Here is a 508-residue protein sequence, read N- to C-terminus: Photosystem II CP47 reaction center protein (508 aa).

6 helical membrane passes run 21–36 (SVHIMHTALVAGWAGS), 101–115 (IVFSGLCFLAAIWHW), 140–156 (GIHLFLSGVACFGFGAF), 203–218 (IAAGTLGILAGLFHLS), 237–252 (VLSSSIAAVFFAAFVV), and 457–472 (SFALLFFFGHIWHGAR).

This sequence belongs to the PsbB/PsbC family. PsbB subfamily. In terms of assembly, PSII is composed of 1 copy each of membrane proteins PsbA, PsbB, PsbC, PsbD, PsbE, PsbF, PsbH, PsbI, PsbJ, PsbK, PsbL, PsbM, PsbT, PsbX, PsbY, PsbZ, Psb30/Ycf12, at least 3 peripheral proteins of the oxygen-evolving complex and a large number of cofactors. It forms dimeric complexes. Binds multiple chlorophylls. PSII binds additional chlorophylls, carotenoids and specific lipids. is required as a cofactor.

It localises to the plastid. Its subcellular location is the chloroplast thylakoid membrane. Its function is as follows. One of the components of the core complex of photosystem II (PSII). It binds chlorophyll and helps catalyze the primary light-induced photochemical processes of PSII. PSII is a light-driven water:plastoquinone oxidoreductase, using light energy to abstract electrons from H(2)O, generating O(2) and a proton gradient subsequently used for ATP formation. In Carica papaya (Papaya), this protein is Photosystem II CP47 reaction center protein.